The chain runs to 468 residues: Glutamate--tRNA ligase (468 aa).

Residues 8 to 18 (PSPTGDPHVGT) carry the 'HIGH' region motif. Residues 243 to 247 (KISKR) carry the 'KMSKS' region motif. Lysine 246 provides a ligand contact to ATP.

This sequence belongs to the class-I aminoacyl-tRNA synthetase family. Glutamate--tRNA ligase type 1 subfamily. Monomer.

It localises to the cytoplasm. The enzyme catalyses tRNA(Glu) + L-glutamate + ATP = L-glutamyl-tRNA(Glu) + AMP + diphosphate. Functionally, catalyzes the attachment of glutamate to tRNA(Glu) in a two-step reaction: glutamate is first activated by ATP to form Glu-AMP and then transferred to the acceptor end of tRNA(Glu). The protein is Glutamate--tRNA ligase of Thermus thermophilus (strain ATCC BAA-163 / DSM 7039 / HB27).